The following is a 150-amino-acid chain: Large ribosomal subunit protein uL22c (150 aa).

It belongs to the universal ribosomal protein uL22 family. In terms of assembly, part of the 50S ribosomal subunit.

The protein resides in the plastid. Its subcellular location is the chloroplast. This protein binds specifically to 23S rRNA. In terms of biological role, the globular domain of the protein is located near the polypeptide exit tunnel on the outside of the subunit, while an extended beta-hairpin is found that lines the wall of the exit tunnel in the center of the 70S ribosome. The sequence is that of Large ribosomal subunit protein uL22c (rpl22) from Fagopyrum esculentum subsp. ancestrale (Wild buckwheat).